The sequence spans 228 residues: UPF0173 metal-dependent hydrolase LMHCC_0991 (228 aa).

Belongs to the UPF0173 family.

This is UPF0173 metal-dependent hydrolase LMHCC_0991 from Listeria monocytogenes serotype 4a (strain HCC23).